The chain runs to 160 residues: Ribosomal RNA large subunit methyltransferase H (160 aa).

S-adenosyl-L-methionine contacts are provided by residues leucine 76, glycine 108, and 127 to 132 (FGALTW).

Belongs to the RNA methyltransferase RlmH family. Homodimer.

It is found in the cytoplasm. It catalyses the reaction pseudouridine(1915) in 23S rRNA + S-adenosyl-L-methionine = N(3)-methylpseudouridine(1915) in 23S rRNA + S-adenosyl-L-homocysteine + H(+). Its function is as follows. Specifically methylates the pseudouridine at position 1915 (m3Psi1915) in 23S rRNA. The chain is Ribosomal RNA large subunit methyltransferase H from Mesorhizobium japonicum (strain LMG 29417 / CECT 9101 / MAFF 303099) (Mesorhizobium loti (strain MAFF 303099)).